A 576-amino-acid chain; its full sequence is Rop guanine nucleotide exchange factor 13 (576 aa).

Residues 119-485 (KSCYFAYVTE…QLTQNPELAM (367 aa)) form the PRONE domain. Residues 557 to 570 (KTTYLESLGTTRSP) are compositionally biased toward polar residues. Residues 557 to 576 (KTTYLESLGTTRSPTAGRYS) are disordered.

As to quaternary structure, interacts with PRK6. Specifically expressed in mature flowers.

Functionally, guanine-nucleotide exchange factor (GEF) that acts as an activator of Rop (Rho of plants) GTPases by promoting the exchange of GDP for GTP. The polypeptide is Rop guanine nucleotide exchange factor 13 (Arabidopsis thaliana (Mouse-ear cress)).